We begin with the raw amino-acid sequence, 330 residues long: Reaction center protein M chain (330 aa).

Helical transmembrane passes span glycine 57–glycine 83, glycine 115–lysine 144, and lysine 147–glycine 172. (7R,8Z)-bacteriochlorophyll b is bound by residues histidine 185 and histidine 205. A helical transmembrane segment spans residues asparagine 202–threonine 230. 2 residues coordinate Fe cation: histidine 222 and glutamate 237. Residue tryptophan 255 participates in a ubiquinone binding. Residues threonine 264–threonine 290 traverse the membrane as a helical segment. Residue histidine 269 participates in Fe cation binding.

The protein belongs to the reaction center PufL/M/PsbA/D family. Reaction center is composed of four bacteriochlorophylls, two bacteriopheophytins, two ubiquinones, one iron, and two highly hydrophobic polypeptide chains (designated L and M).

It is found in the cellular chromatophore membrane. In terms of biological role, the reaction center is a membrane-bound complex that mediates the initial photochemical event in the electron transfer process of photosynthesis. This Roseobacter denitrificans (strain ATCC 33942 / OCh 114) (Erythrobacter sp. (strain OCh 114)) protein is Reaction center protein M chain (pufM).